Here is a 61-residue protein sequence, read N- to C-terminus: ERMES regulator 1 (61 aa).

Topologically, residues 1–20 (MLPNLRRIFASFRTEEEERS) are mitochondrial intermembrane. The helical transmembrane segment at 21-43 (YSRKAFFHLIGYITCSVLFSWLV) threads the bilayer. Topologically, residues 44–61 (RKKVISSPVVSSPIHALS) are cytoplasmic.

It belongs to the EMR1 family. As to quaternary structure, interacts with the ER-mitochondria encounter structure (ERMES) complex. Interacts with mdm12. Interacts with mdm34.

It is found in the mitochondrion outer membrane. Functionally, mediates the formation of endoplasmic reticulum (ER)-mitochondria encounter structure (ERMES) foci, thereby contributing to the formation of ER-mitochondrial contact sites. The protein is ERMES regulator 1 of Schizosaccharomyces pombe (strain 972 / ATCC 24843) (Fission yeast).